A 737-amino-acid polypeptide reads, in one-letter code: Phosphoribosylformylglycinamidine synthase subunit PurL (737 aa).

Residue H50 is part of the active site. 2 residues coordinate ATP: Y53 and K92. A Mg(2+)-binding site is contributed by E94. Residues 95–98 (SHNH) and R117 each bind substrate. H96 acts as the Proton acceptor in catalysis. D118 contacts Mg(2+). Q241 is a binding site for substrate. Mg(2+) is bound at residue D269. Position 313–315 (313–315 (ESQ)) interacts with substrate. The ATP site is built by D495 and G532. N533 lines the Mg(2+) pocket. Position 535 (S535) interacts with substrate.

This sequence belongs to the FGAMS family. As to quaternary structure, monomer. Part of the FGAM synthase complex composed of 1 PurL, 1 PurQ and 2 PurS subunits.

The protein localises to the cytoplasm. The enzyme catalyses N(2)-formyl-N(1)-(5-phospho-beta-D-ribosyl)glycinamide + L-glutamine + ATP + H2O = 2-formamido-N(1)-(5-O-phospho-beta-D-ribosyl)acetamidine + L-glutamate + ADP + phosphate + H(+). It functions in the pathway purine metabolism; IMP biosynthesis via de novo pathway; 5-amino-1-(5-phospho-D-ribosyl)imidazole from N(2)-formyl-N(1)-(5-phospho-D-ribosyl)glycinamide: step 1/2. In terms of biological role, part of the phosphoribosylformylglycinamidine synthase complex involved in the purines biosynthetic pathway. Catalyzes the ATP-dependent conversion of formylglycinamide ribonucleotide (FGAR) and glutamine to yield formylglycinamidine ribonucleotide (FGAM) and glutamate. The FGAM synthase complex is composed of three subunits. PurQ produces an ammonia molecule by converting glutamine to glutamate. PurL transfers the ammonia molecule to FGAR to form FGAM in an ATP-dependent manner. PurS interacts with PurQ and PurL and is thought to assist in the transfer of the ammonia molecule from PurQ to PurL. In Bartonella bacilliformis (strain ATCC 35685 / KC583 / Herrer 020/F12,63), this protein is Phosphoribosylformylglycinamidine synthase subunit PurL.